A 185-amino-acid polypeptide reads, in one-letter code: Large ribosomal subunit protein uL5 (185 aa).

This sequence belongs to the universal ribosomal protein uL5 family. Part of the 50S ribosomal subunit; part of the 5S rRNA/L5/L18/L25 subcomplex. Contacts the 5S rRNA and the P site tRNA. Forms a bridge to the 30S subunit in the 70S ribosome.

Functionally, this is one of the proteins that bind and probably mediate the attachment of the 5S RNA into the large ribosomal subunit, where it forms part of the central protuberance. In the 70S ribosome it contacts protein S13 of the 30S subunit (bridge B1b), connecting the 2 subunits; this bridge is implicated in subunit movement. Contacts the P site tRNA; the 5S rRNA and some of its associated proteins might help stabilize positioning of ribosome-bound tRNAs. The chain is Large ribosomal subunit protein uL5 from Streptomyces griseus subsp. griseus (strain JCM 4626 / CBS 651.72 / NBRC 13350 / KCC S-0626 / ISP 5235).